Consider the following 489-residue polypeptide: Betaine aldehyde dehydrogenase (489 aa).

2 residues coordinate K(+): Thr-26 and Asp-93. 150-152 (GAW) serves as a coordination point for NAD(+). The active-site Charge relay system is the Lys-162. An NAD(+)-binding site is contributed by 176 to 179 (KPSE). K(+) is bound at residue Val-180. 229 to 232 (GVET) contacts NAD(+). Position 245 (Leu-245) interacts with K(+). Glu-251 acts as the Proton acceptor in catalysis. Residues Gly-253, Cys-285, and Glu-386 each coordinate NAD(+). Residue Cys-285 is the Nucleophile of the active site. Cysteine sulfenic acid (-SOH) is present on Cys-285. Lys-456 and Gly-459 together coordinate K(+). Residue Glu-463 is the Charge relay system of the active site.

Belongs to the aldehyde dehydrogenase family. As to quaternary structure, dimer of dimers. The cofactor is K(+).

The catalysed reaction is betaine aldehyde + NAD(+) + H2O = glycine betaine + NADH + 2 H(+). It functions in the pathway amine and polyamine biosynthesis; betaine biosynthesis via choline pathway; betaine from betaine aldehyde: step 1/1. Involved in the biosynthesis of the osmoprotectant glycine betaine. Catalyzes the irreversible oxidation of betaine aldehyde to the corresponding acid. The chain is Betaine aldehyde dehydrogenase from Burkholderia orbicola (strain MC0-3).